The primary structure comprises 373 residues: 3',5'-bisphosphate nucleotidase AHL (373 aa).

Asp-52 acts as the Proton acceptor in catalysis. Positions 77, 144, 146, and 147 each coordinate Mg(2+). Thr-149 serves as the catalytic Proton acceptor. Positions 149, 281, 284, 298, and 310 each coordinate adenosine 3',5'-bisphosphate. Residues Ser-281, Lys-284, Lys-298, and Asp-310 each contribute to the AMP site. Position 310 (Asp-310) interacts with Mg(2+).

Belongs to the inositol monophosphatase superfamily. Requires Mg(2+) as cofactor. As to expression, expressed in roots, leaves, stems, flowers and siliques.

It carries out the reaction adenosine 3',5'-bisphosphate + H2O = AMP + phosphate. It catalyses the reaction 3'-phosphoadenylyl sulfate + H2O = adenosine 5'-phosphosulfate + phosphate. Its activity is regulated as follows. Inhibited by Li(+) (IC(50)=10 mM), Na(+) (IC(50)=50 mM) and Ca(2+) (IC(50)=0.06 mM). Functionally, phosphatase that converts adenosine 3'-phosphate 5'-phosphosulfate (PAPS) to adenosine 5'-phosphosulfate (APS) and 3'-phosphoadenosine 5'-phosphate (3'-PAP) to AMP. May regulate the flux of sulfur in the sulfur-activation pathway by converting PAPS to APS. Prevents both the toxicity of PAP on RNA processing enzymes as well as the product inhibition by PAP of sulfate conjugation. The polypeptide is 3',5'-bisphosphate nucleotidase AHL (Arabidopsis thaliana (Mouse-ear cress)).